We begin with the raw amino-acid sequence, 400 residues long: CCA-adding enzyme (400 aa).

Positions 28 and 31 each coordinate ATP. CTP contacts are provided by Gly-28 and Arg-31. Residues Asp-41 and Asp-43 each coordinate Mg(2+). ATP is bound by residues Arg-112, Asp-155, Arg-158, Arg-161, and Arg-164. CTP is bound by residues Arg-112, Asp-155, Arg-158, Arg-161, and Arg-164.

Belongs to the tRNA nucleotidyltransferase/poly(A) polymerase family. Bacterial CCA-adding enzyme type 3 subfamily. In terms of assembly, homodimer. Mg(2+) serves as cofactor.

The enzyme catalyses a tRNA precursor + 2 CTP + ATP = a tRNA with a 3' CCA end + 3 diphosphate. It catalyses the reaction a tRNA with a 3' CCA end + 2 CTP + ATP = a tRNA with a 3' CCACCA end + 3 diphosphate. In terms of biological role, catalyzes the addition and repair of the essential 3'-terminal CCA sequence in tRNAs without using a nucleic acid template. Adds these three nucleotides in the order of C, C, and A to the tRNA nucleotide-73, using CTP and ATP as substrates and producing inorganic pyrophosphate. tRNA 3'-terminal CCA addition is required both for tRNA processing and repair. Also involved in tRNA surveillance by mediating tandem CCA addition to generate a CCACCA at the 3' terminus of unstable tRNAs. While stable tRNAs receive only 3'-terminal CCA, unstable tRNAs are marked with CCACCA and rapidly degraded. This is CCA-adding enzyme from Staphylococcus aureus (strain COL).